The following is a 324-amino-acid chain: MKPSVILYKALPDDLLQRLQAHFTVHQVANLSPQTVVQNAAIFAEAEGLLGSNENVDAALLEKMPKLRATSTISVGYDNFDVDALTARKILLMHTPTVLTETVADTLMALVLSTARRVVEVAERVKAGEWTASIGPDWYGTDVHHKTLGIVGMGRIGMALAQRAHFGFNMPILYNARRHHKEAEERFNARYCDLDTLLQESDFVCLILPLTDETHHLFGAEQFAKMKSSAIFINAGRGPVVDENALIAALQKGEIHVAGLDVFEQEPLSVDSPLLSMANVVAVPHIGSATHETRYGMAACAVDNLIDALQGKVEKNCVNPHVAD.

Residues R237 and E266 contribute to the active site. H285 functions as the Proton donor in the catalytic mechanism.

The protein belongs to the D-isomer specific 2-hydroxyacid dehydrogenase family. GhrB subfamily. As to quaternary structure, homodimer.

The protein localises to the cytoplasm. The enzyme catalyses glycolate + NADP(+) = glyoxylate + NADPH + H(+). It catalyses the reaction (R)-glycerate + NAD(+) = 3-hydroxypyruvate + NADH + H(+). The catalysed reaction is (R)-glycerate + NADP(+) = 3-hydroxypyruvate + NADPH + H(+). In terms of biological role, catalyzes the NADPH-dependent reduction of glyoxylate and hydroxypyruvate into glycolate and glycerate, respectively. The sequence is that of Glyoxylate/hydroxypyruvate reductase B from Shigella flexneri serotype 5b (strain 8401).